The sequence spans 1037 residues: MERARRLANKAILGRLVSQTKHNPSISSPALCSPSRYVSSLSPYVCSGTNVRSDRNLNGFGSQVRTISVEALKPSDTFPRRHNSATPEEQTKMAEFVGFPNLDSLIDATVPKSIRLDSMKYSKFDEGLTESQMIAHMQDLASKNKIFKSFIGMGYYNTSVPTVILRNIMENPGWYTQYTPYQAEIAQGRLESLLNFQTMVTDLTGLPMSNASLLDEGTAAAEAMAMCNNIQKGKKKTFIIASNCHPQTIDICKTRADGFDLKVVTSDLKDFDYSSGDVCGVLVQYPGTEGELLDYSEFIKNAHANGVKVVMASDLLALTILKPPGELGADIVVGSAQRFGVPMGYGGPHAAFLATSQEYKRMMPGRIIGVSVDSSGKPALRMAMQTREQHIRRDKATSNICTAQALLANMAAMFGVYHGPEGLKTIAKRVHGLAGTFAAGLKKLGTVQVQDLPFFDTVKVTCVDSKAIAEEAYKHKMNLRIVDKNTITVAFDETTTIEDVDTLFKVFALGKPVTFTAASIAPEVQDAIPSGLVRETPYLTHPIFNMYHTEHELLRYISKLQSKDLSLCHSMIPLGSCTMKLNATTEMMPVTWPAFADIHPFAPTEQAQGYQEMFKNLGDLLCTITGFDSFSLQPNAGAAGEYAGLMVIRAYHMARGDHHRNVCIIPVSAHGTNPASAAMCGMKIITVGTDSKGNINIEELRKAAEANKENLSALMVTYPSTHGVYEEGIDEICKIIHDNGGQVYMDGANMNAQVGLTSPGWIGADVCHLNLHKTFCIPHGGGGPGMGPIGVKKHLAPYLPSHPVVATGGIPAPEQSQPLGTIAAAPWGSALILPISYTYIAMMGSQGITNASKIAILNANYMAKRLENHYPILFRGVNGTVAHEFIVDLRPLKTTAGIEPEDVAKRLIDYGFHGPTMSWPVPGTLMIEPTESESKAELDRFCDALISIRQEIAEIEKGNVDLNNNVIKGAPHPPQLLMADKWTKPYSREYAAYPAPWLRAAKFWPTTCRVDNVYGDRNLICTLQPPQEYEEKAEATA.

The N-terminal 66 residues, 1-66, are a transit peptide targeting the mitochondrion; sequence MERARRLANK…LNGFGSQVRT (66 aa). N6-(pyridoxal phosphate)lysine is present on K773.

This sequence belongs to the GcvP family. As to quaternary structure, homodimer. The glycine cleavage system is composed of four proteins: P, T, L and H. Pyridoxal 5'-phosphate serves as cofactor. In terms of tissue distribution, expressed in leaves, stems and roots.

Its subcellular location is the mitochondrion. The enzyme catalyses N(6)-[(R)-lipoyl]-L-lysyl-[glycine-cleavage complex H protein] + glycine + H(+) = N(6)-[(R)-S(8)-aminomethyldihydrolipoyl]-L-lysyl-[glycine-cleavage complex H protein] + CO2. Its function is as follows. The glycine cleavage system catalyzes the degradation of glycine. The P protein binds the alpha-amino group of glycine through its pyridoxal phosphate cofactor; CO(2) is released and the remaining methylamine moiety is then transferred to the lipoamide cofactor of the H protein. This is Glycine dehydrogenase (decarboxylating) A, mitochondrial (GDCSPA) from Flaveria pringlei.